Reading from the N-terminus, the 374-residue chain is Transcription factor IIIA (374 aa).

7 consecutive C2H2-type zinc fingers follow at residues 23-47 (FHCPYEECGKKYSRPSLLEQHLRTH), 53-77 (FVCDYTGCSKAFYRKSHLKIHKRCH), 83-107 (FSCHYDGCDAQFYTQQHLERHIEVH), 113-138 (YACTWEGCDECFSKHQQLRSHISACH), 144-169 (YPCTYQDCELRFATKQKLQNHVNRAH), 204-226 (PSCSICGRQFKTAAHLRHHVVLH), and 236-261 (YHCPMEGCKKSFTRSSALKKHISVIH). The C2H2-type 8; atypical zinc finger occupies 267-291 (FHCDSCGTKFGYKHMLQRHLERGTC). The segment at 349–374 (YSCSFPECNYRFKRLYDMHRHLNSHH) adopts a C2H2-type 9 zinc-finger fold.

The protein resides in the nucleus. Is required for correct transcription of 5S RNA genes by RNA polymerase III. Also binds the transcribed 5S RNA's. Initiates transcription of the 5S ribosomal RNA gene. The polypeptide is Transcription factor IIIA (sfc2) (Schizosaccharomyces pombe (strain 972 / ATCC 24843) (Fission yeast)).